A 461-amino-acid polypeptide reads, in one-letter code: ATP-dependent protease ATPase subunit HslU (461 aa).

ATP is bound by residues Ile18, 60 to 65, Asp274, Glu339, and Arg411; that span reads GVGKTE.

The protein belongs to the ClpX chaperone family. HslU subfamily. A double ring-shaped homohexamer of HslV is capped on each side by a ring-shaped HslU homohexamer. The assembly of the HslU/HslV complex is dependent on binding of ATP.

Its subcellular location is the cytoplasm. ATPase subunit of a proteasome-like degradation complex; this subunit has chaperone activity. The binding of ATP and its subsequent hydrolysis by HslU are essential for unfolding of protein substrates subsequently hydrolyzed by HslV. HslU recognizes the N-terminal part of its protein substrates and unfolds these before they are guided to HslV for hydrolysis. This is ATP-dependent protease ATPase subunit HslU from Carboxydothermus hydrogenoformans (strain ATCC BAA-161 / DSM 6008 / Z-2901).